Here is a 447-residue protein sequence, read N- to C-terminus: tRNA modification GTPase MnmE (447 aa).

(6S)-5-formyl-5,6,7,8-tetrahydrofolate contacts are provided by Arg-24, Glu-81, and Lys-120. The region spanning 216-371 (GLNVAIAGKP…LRKELSNISG (156 aa)) is the TrmE-type G domain. Asn-226 lines the K(+) pocket. GTP is bound by residues 226 to 231 (NAGKSS), 245 to 251 (TDIAGTT), and 270 to 273 (DTAG). Residue Ser-230 participates in Mg(2+) binding. The K(+) site is built by Thr-245, Ile-247, and Thr-250. Position 251 (Thr-251) interacts with Mg(2+). Lys-447 lines the (6S)-5-formyl-5,6,7,8-tetrahydrofolate pocket.

This sequence belongs to the TRAFAC class TrmE-Era-EngA-EngB-Septin-like GTPase superfamily. TrmE GTPase family. Homodimer. Heterotetramer of two MnmE and two MnmG subunits. Requires K(+) as cofactor.

It localises to the cytoplasm. Functionally, exhibits a very high intrinsic GTPase hydrolysis rate. Involved in the addition of a carboxymethylaminomethyl (cmnm) group at the wobble position (U34) of certain tRNAs, forming tRNA-cmnm(5)s(2)U34. This chain is tRNA modification GTPase MnmE, found in Vesicomyosocius okutanii subsp. Calyptogena okutanii (strain HA).